The sequence spans 391 residues: MRELLDSEYDVIVIGAGPGGSMASYHSSINGAKTLLIDKSQEIGTPVRCAEAVPYLDEFGINPDPSFIRSKIDGGILVAPNGKKIIVKGGKTQGYVVERKIFDKHLAVRSANVGTKIAIKSRVVGLDYDGEKYTVIVNHLGQIYAIKAKIVIAADGVESSIAEMAGIKCKKKVTEICSCAEYEMTNVKLLDKNMMEFYFGDICPKGYVWIFPKGETANVGLGIIDSKKKAIDYLNEFLEHPLLEGRLDNATPIEFKCGGAPVGGPIEKTVADNFMVVGDAAGQISPISGGGIYLSLSCGSIAGKVAGEAIKSNNCSEDYLVEYENRWKEKYYKLLMDELKYKKVLQKFSEKELNALADAMDERLEEIDVAKIAFRAVKRAPSLLKYFKDII.

FAD contacts are provided by Gly19, Asp38, Cys49, Ala50, Ala52, Arg99, Val123, Asp279, Gly291, and Ile292. Val369 serves as a coordination point for a 2,3-bis-O-(geranylgeranyl)-sn-glycerol 1-phospholipid.

It belongs to the geranylgeranyl reductase family. DGGGPL reductase subfamily. It depends on FAD as a cofactor.

The catalysed reaction is a 2,3-bis-O-phytanyl-sn-glycerol 1-phospholipid + 8 A = a 2,3-bis-O-(geranylgeranyl)-sn-glycerol 1-phospholipid + 8 AH2. It carries out the reaction 2,3-bis-O-(phytanyl)-sn-glycerol 1-phosphate + 8 A = 2,3-bis-O-(geranylgeranyl)-sn-glycerol 1-phosphate + 8 AH2. It catalyses the reaction CDP-2,3-bis-O-(geranylgeranyl)-sn-glycerol + 8 AH2 = CDP-2,3-bis-O-(phytanyl)-sn-glycerol + 8 A. The enzyme catalyses archaetidylserine + 8 AH2 = 2,3-bis-O-phytanyl-sn-glycero-3-phospho-L-serine + 8 A. It functions in the pathway membrane lipid metabolism; glycerophospholipid metabolism. Functionally, is involved in the reduction of 2,3-digeranylgeranylglycerophospholipids (unsaturated archaeols) into 2,3-diphytanylglycerophospholipids (saturated archaeols) in the biosynthesis of archaeal membrane lipids. Catalyzes the formation of archaetidic acid (2,3-di-O-phytanyl-sn-glyceryl phosphate) from 2,3-di-O-geranylgeranylglyceryl phosphate (DGGGP) via the hydrogenation of each double bond of the isoprenoid chains. Is also probably able to reduce double bonds of geranyl groups in CDP-2,3-bis-O-(geranylgeranyl)-sn-glycerol and archaetidylserine, thus acting at various stages in the biosynthesis of archaeal membrane lipids. The polypeptide is Digeranylgeranylglycerophospholipid reductase (Methanococcus aeolicus (strain ATCC BAA-1280 / DSM 17508 / OCM 812 / Nankai-3)).